The sequence spans 103 residues: Phosphoribosyl-ATP pyrophosphatase (103 aa).

It belongs to the PRA-PH family.

The protein localises to the cytoplasm. It carries out the reaction 1-(5-phospho-beta-D-ribosyl)-ATP + H2O = 1-(5-phospho-beta-D-ribosyl)-5'-AMP + diphosphate + H(+). It functions in the pathway amino-acid biosynthesis; L-histidine biosynthesis; L-histidine from 5-phospho-alpha-D-ribose 1-diphosphate: step 2/9. This is Phosphoribosyl-ATP pyrophosphatase from Cereibacter sphaeroides (strain ATCC 17025 / ATH 2.4.3) (Rhodobacter sphaeroides).